The sequence spans 368 residues: Histidinol-phosphate aminotransferase (368 aa).

Lys-229 carries the post-translational modification N6-(pyridoxal phosphate)lysine.

This sequence belongs to the class-II pyridoxal-phosphate-dependent aminotransferase family. Histidinol-phosphate aminotransferase subfamily. Homodimer. It depends on pyridoxal 5'-phosphate as a cofactor.

It catalyses the reaction L-histidinol phosphate + 2-oxoglutarate = 3-(imidazol-4-yl)-2-oxopropyl phosphate + L-glutamate. It functions in the pathway amino-acid biosynthesis; L-histidine biosynthesis; L-histidine from 5-phospho-alpha-D-ribose 1-diphosphate: step 7/9. This is Histidinol-phosphate aminotransferase from Acidovorax ebreus (strain TPSY) (Diaphorobacter sp. (strain TPSY)).